Here is a 108-residue protein sequence, read N- to C-terminus: Ribulose bisphosphate carboxylase small subunit (108 aa).

It belongs to the RuBisCO small chain family. In terms of assembly, heterohexadecamer of 8 large and 8 small subunits.

Functionally, ruBisCO catalyzes two reactions: the carboxylation of D-ribulose 1,5-bisphosphate, the primary event in carbon dioxide fixation, as well as the oxidative fragmentation of the pentose substrate. Both reactions occur simultaneously and in competition at the same active site. Although the small subunit is not catalytic it is essential for maximal activity. This is Ribulose bisphosphate carboxylase small subunit from Nitrobacter vulgaris.